The primary structure comprises 50 residues: Sperm protamine P1 (50 aa).

It belongs to the protamine P1 family. Cross-linked by interchain disulfide bonds around the DNA-helix. In terms of tissue distribution, testis.

It is found in the nucleus. The protein resides in the chromosome. Protamines substitute for histones in the chromatin of sperm during the haploid phase of spermatogenesis. They compact sperm DNA into a highly condensed, stable and inactive complex. The polypeptide is Sperm protamine P1 (PRM1) (Saimiri sciureus (Common squirrel monkey)).